Here is a 395-residue protein sequence, read N- to C-terminus: Putative pyridoxal phosphate-dependent acyltransferase (395 aa).

110-111 (GF) is a binding site for pyridoxal 5'-phosphate. Histidine 135 is a binding site for substrate. Residues serine 185, 210–213 (DDAH), and 240–243 (TLSK) each bind pyridoxal 5'-phosphate. Lysine 243 carries the post-translational modification N6-(pyridoxal phosphate)lysine. Threonine 357 is a substrate binding site.

The protein belongs to the class-II pyridoxal-phosphate-dependent aminotransferase family. As to quaternary structure, homodimer. Requires pyridoxal 5'-phosphate as cofactor.

The polypeptide is Putative pyridoxal phosphate-dependent acyltransferase (Staphylococcus aureus (strain COL)).